We begin with the raw amino-acid sequence, 198 residues long: Transcriptional regulator GfcR (198 aa).

It belongs to the purine/pyrimidine phosphoribosyltransferase family. GfcR subfamily.

The polypeptide is Transcriptional regulator GfcR (Methanospirillum hungatei JF-1 (strain ATCC 27890 / DSM 864 / NBRC 100397 / JF-1)).